The primary structure comprises 1098 residues: Trehalose synthase complex regulatory subunit TSL1 (1098 aa).

Residues S49, S53, S56, S71, S77, S135, S147, and S161 each carry the phosphoserine modification. 3 disordered regions span residues 59–86 (APAPEQGVPPAISRSATRSPSAFNRASS), 129–168 (SVERFFSPSSNIPTDRIASPIQHEHDSGSRIASPIQQQQQ), and 192–244 (SQTS…PSIK). Residues 72–86 (RSATRSPSAFNRASS) are compositionally biased toward polar residues. 2 tandem repeats follow at residues 144–150 (RIASPIQ) and 158–164 (RIASPIQ). A 2 X 7 AA repeats of R-I-A-S-P-I-Q region spans residues 144–164 (RIASPIQHEHDSGSRIASPIQ). Over residues 213-227 (RPTSAATSLVNRTKQ) the composition is skewed to polar residues. A compositionally biased stretch (low complexity) spans 228–242 (GSASSGSSGSSAPPS). S229 carries the post-translational modification Phosphoserine. A Phosphothreonine modification is found at T251. Positions 274–297 (ADISSSETSSQHNESDPDDLTTAP) are disordered. S303 is modified (phosphoserine). The TPS complex domain stretch occupies residues 320–812 (GGYSNKSKLK…FNQEGSKIFK (493 aa)). T815 is subject to Phosphothreonine. A disordered region spans residues 1000–1027 (SSGQITNIQTPSQQNPSDQEQQPPASPT).

It in the C-terminal section; belongs to the glycosyltransferase 20 family. As to quaternary structure, the trehalose synthase complex is composed of the two catalytic subunits TPS1 and TPS2, and at least one of the two regulatory subunits TPS3 or TSL1.

Its subcellular location is the cytoplasm. Regulatory subunit of the trehalose synthase complex that catalyzes the production of trehalose from glucose-6-phosphate and UDP-glucose in a two step process. May stabilize the trehalose synthase complex, and confer sensitivity to physiological concentrations of phosphate and to fructose 6-phosphate. The polypeptide is Trehalose synthase complex regulatory subunit TSL1 (TSL1) (Saccharomyces cerevisiae (strain ATCC 204508 / S288c) (Baker's yeast)).